The chain runs to 154 residues: Large ribosomal subunit protein uL13 (154 aa).

A disordered region spans residues 131–154; it reads DHKHEAQQPEVVDFKSMNSKNTRG.

Belongs to the universal ribosomal protein uL13 family. In terms of assembly, part of the 50S ribosomal subunit.

Its function is as follows. This protein is one of the early assembly proteins of the 50S ribosomal subunit, although it is not seen to bind rRNA by itself. It is important during the early stages of 50S assembly. This Maricaulis maris (strain MCS10) (Caulobacter maris) protein is Large ribosomal subunit protein uL13.